A 550-amino-acid polypeptide reads, in one-letter code: CTP synthase (550 aa).

Positions 1–265 (MTKFIFVTGG…DEIVVEQLGL (265 aa)) are amidoligase domain. Ser13 is a binding site for CTP. A UTP-binding site is contributed by Ser13. 14–19 (SLGKGI) is a binding site for ATP. Residue Tyr54 coordinates L-glutamine. Position 71 (Asp71) interacts with ATP. 2 residues coordinate Mg(2+): Asp71 and Glu139. CTP-binding positions include 146–148 (DIE), 186–191 (KTKPTQ), and Lys222. UTP-binding positions include 186 to 191 (KTKPTQ) and Lys222. The region spanning 290–541 (TITLVGKYVD…IRAAAEHRRR (252 aa)) is the Glutamine amidotransferase type-1 domain. Gly351 is an L-glutamine binding site. The active-site Nucleophile; for glutamine hydrolysis is Cys378. Residues 379–382 (LGMQ), Glu402, and Arg469 each bind L-glutamine. Catalysis depends on residues His514 and Glu516.

This sequence belongs to the CTP synthase family. Homotetramer.

The catalysed reaction is UTP + L-glutamine + ATP + H2O = CTP + L-glutamate + ADP + phosphate + 2 H(+). It carries out the reaction L-glutamine + H2O = L-glutamate + NH4(+). It catalyses the reaction UTP + NH4(+) + ATP = CTP + ADP + phosphate + 2 H(+). Its pathway is pyrimidine metabolism; CTP biosynthesis via de novo pathway; CTP from UDP: step 2/2. With respect to regulation, allosterically activated by GTP, when glutamine is the substrate; GTP has no effect on the reaction when ammonia is the substrate. The allosteric effector GTP functions by stabilizing the protein conformation that binds the tetrahedral intermediate(s) formed during glutamine hydrolysis. Inhibited by the product CTP, via allosteric rather than competitive inhibition. Functionally, catalyzes the ATP-dependent amination of UTP to CTP with either L-glutamine or ammonia as the source of nitrogen. Regulates intracellular CTP levels through interactions with the four ribonucleotide triphosphates. The chain is CTP synthase from Nitrosococcus oceani (strain ATCC 19707 / BCRC 17464 / JCM 30415 / NCIMB 11848 / C-107).